The following is a 219-amino-acid chain: Capsid protein (219 aa).

Positions 5–29 (RRRRVVRRRKPVRRLRRRRRRFFKR) are nuclear localization signals.

The protein belongs to the circoviridae capsid protein family. Homomultimer. Assembles in the nucleus, presumably in an immature form, then migrates to the cytoplasm once assembled as mature virion. Interacts with Rep; this interaction relocates Rep into the nucleus.

It is found in the host nucleus. The protein localises to the virion. In terms of biological role, self-assembles to form the virion icosahedral capsid with a T=1 symmetry. This very small capsid (17-22 nm in diameter) allows the virus to be very stable in the environment and resistant to some disinfectants, including detergents. Essential for the initial attachment to heparan sulfate moieties and chondroitin sulfate B of the host cell surface proteoglycans. After attachment, the virus is endocytosed and traffics to the nucleus. The capsid protein binds and transports the viral genome and Rep across the nuclear envelope. In Homo sapiens (Human), this protein is Capsid protein (Cap).